Here is a 322-residue protein sequence, read N- to C-terminus: MDGYAVRAEAMEKRYGEKRALDGFDLAVGEGTVHGLLGPNGAGKTTAVRILSTLVRLDGGRATVAGLDVARQPREVRARIGLTGQYAAVDEVLTGRQNLEMFGRLFHLGGRRARLRATELLEQFDLTDAGDRGVGKYSGGMRRRLDLAASMILAPAVLFLDEPTTGLDPRSRGEVWESVRALVAGGTTVLLTTQYLEEADKLASRITVIDQGRAIADDTPDGLKNLVGGDRIEVVVAERAEIPRVVKVVARVADGEPEADETESRVHAPVTDRVTALTEVARTLQDEGVRVEDIGLRRPSLDDVFLRLTGHRTENTEAKEAA.

Positions 6-236 (VRAEAMEKRY…VGGDRIEVVV (231 aa)) constitute an ABC transporter domain. 38-45 (GPNGAGKT) lines the ATP pocket.

The protein belongs to the ABC transporter superfamily. Drug exporter-1 (DrugE1) (TC 3.A.1.105) family. In terms of assembly, the complex is probably composed of two ATP-binding proteins (DrrA2) and two transmembrane proteins (DrrB2).

It is found in the cell membrane. It catalyses the reaction daunorubicin(in) + ATP + H2O = daunorubicin(out) + ADP + phosphate + H(+). In terms of biological role, part of the ABC transporter complex DrrA2B2 involved in daunorubicin efflux. Responsible for energy coupling to the transport system. Confers self-resistance to daunorubicin, an antibiotic produced by S.coeruleorubidus. This is Daunorubicin resistance ATP-binding protein DrrA2 from Streptomyces coeruleorubidus.